The primary structure comprises 495 residues: DNA double-strand break repair helicase HerA (495 aa).

ATP contacts are provided by residues Arg-141, 150–155 (GSGKSN), and 458–459 (KI).

This sequence belongs to the HerA family. In terms of assembly, forms a hexamer or a heptamer. Interacts with Mre11.

The catalysed reaction is Couples ATP hydrolysis with the unwinding of duplex DNA at the replication fork by translocating in the 5'-3' direction. This creates two antiparallel DNA single strands (ssDNA). The leading ssDNA polymer is the template for DNA polymerase III holoenzyme which synthesizes a continuous strand.. It carries out the reaction ATP + H2O = ADP + phosphate + H(+). The enzyme catalyses Couples ATP hydrolysis with the unwinding of duplex DNA by translocating in the 3'-5' direction.. ATPase activity is slightly stimulated by either circular single- or double-stranded (ds)DNA with a weak preference for dsDNA. Helicase activity is stimulated by Mre11. In terms of biological role, involved in DNA double-strand break (DSB) repair. Probably acts with NurA to stimulate resection of the 5' strand and produce the long 3' single-strand that is required for RadA loading. Has DNA-dependent ATPase activity and bidirectional DNA helicase activity. Loads on either a 3' or a 5' DNA tail for subsequent DNA unwinding. Can also unwind blunt-ended dsDNA, Holliday junction and splayed-arm DNA. This chain is DNA double-strand break repair helicase HerA, found in Sulfurisphaera tokodaii (strain DSM 16993 / JCM 10545 / NBRC 100140 / 7) (Sulfolobus tokodaii).